The following is a 399-amino-acid chain: Rho GTPase-activating protein gacC (399 aa).

Over residues 1–13 (MESKDQNVYRKGS) the composition is skewed to basic and acidic residues. The disordered stretch occupies residues 1–80 (MESKDQNVYR…SSSTSTTPVK (80 aa)). Polar residues predominate over residues 14 to 31 (DNFSKGSNTFFGNLKSIS). The segment covering 61–79 (SVDSSSSNPSSSSTSTTPV) has biased composition (low complexity). Residues 186-375 (VELEESFKTA…NLISFFQQIF (190 aa)) form the Rho-GAP domain.

The protein resides in the cytoplasm. In terms of biological role, rho GTPase-activating protein involved in the signal transduction pathway. This is Rho GTPase-activating protein gacC (gacC) from Dictyostelium discoideum (Social amoeba).